Consider the following 390-residue polypeptide: Lipid-A-disaccharide synthase (390 aa).

Belongs to the LpxB family.

It catalyses the reaction a lipid X + a UDP-2-N,3-O-bis[(3R)-3-hydroxyacyl]-alpha-D-glucosamine = a lipid A disaccharide + UDP + H(+). It participates in bacterial outer membrane biogenesis; LPS lipid A biosynthesis. Condensation of UDP-2,3-diacylglucosamine and 2,3-diacylglucosamine-1-phosphate to form lipid A disaccharide, a precursor of lipid A, a phosphorylated glycolipid that anchors the lipopolysaccharide to the outer membrane of the cell. This chain is Lipid-A-disaccharide synthase, found in Haemophilus ducreyi (strain 35000HP / ATCC 700724).